Reading from the N-terminus, the 444-residue chain is N-succinylarginine dihydrolase (444 aa).

Residues 19 to 28, asparagine 110, and 137 to 138 contribute to the substrate site; these read SGLSFGNVAS and HR. The active site involves glutamate 174. Arginine 214 provides a ligand contact to substrate. Histidine 250 is a catalytic residue. Substrate contacts are provided by aspartate 252 and asparagine 362. Cysteine 368 (nucleophile) is an active-site residue.

It belongs to the succinylarginine dihydrolase family. Homodimer.

The enzyme catalyses N(2)-succinyl-L-arginine + 2 H2O + 2 H(+) = N(2)-succinyl-L-ornithine + 2 NH4(+) + CO2. It functions in the pathway amino-acid degradation; L-arginine degradation via AST pathway; L-glutamate and succinate from L-arginine: step 2/5. Functionally, catalyzes the hydrolysis of N(2)-succinylarginine into N(2)-succinylornithine, ammonia and CO(2). The polypeptide is N-succinylarginine dihydrolase (Photobacterium profundum (strain SS9)).